The following is a 139-amino-acid chain: Cystatin-11 (139 aa).

The N-terminal stretch at methionine 1–arginine 28 is a signal peptide. 2 disulfides stabilise this stretch: cysteine 94/cysteine 102 and cysteine 115/cysteine 135. N-linked (GlcNAc...) asparagine glycosylation occurs at asparagine 134.

Belongs to the cystatin family. Expressed in epididymis, where it localizes to the proximal caput and also part of the midcaput. Not detected in other tissues tested.

It localises to the secreted. Its function is as follows. Has antibacterial activity against the Gram-negative bacteria E.coli. May play a role in sperm maturation and fertilization. The sequence is that of Cystatin-11 from Mus musculus (Mouse).